The chain runs to 221 residues: GFP-like non-fluorescent chromoprotein (221 aa).

The segment at residues 62 to 64 (QYG) is a cross-link (2-iminomethyl-5-imidazolinone (Gln-Gly)). At tyrosine 63 the chain carries 2,3-didehydrotyrosine.

Belongs to the GFP family. Homotetramer. In terms of processing, contains a chromophore consisting of modified amino acid residues. The chromophore is formed by autocatalytic backbone condensation between Xaa-N and Gly-(N+2), oxidation of Tyr-(N+1) to didehydrotyrosine, and formation of a double bond to the alpha-amino nitrogen of residue Xaa-N. Maturation of the chromophore requires nothing other than molecular oxygen. The precise stereochemistry of the tyrosine has not been determined.

Functionally, non-fluorescent pigment protein that is lilac in color. The protein is GFP-like non-fluorescent chromoprotein of Goniopora tenuidens (Anemone coral).